A 247-amino-acid chain; its full sequence is ATP synthase delta chain, chloroplastic (247 aa).

A chloroplast-targeting transit peptide spans Met-1–Arg-60.

It belongs to the ATPase delta chain family. As to quaternary structure, F-type ATPases have 2 components, CF(1) - the catalytic core - and CF(0) - the membrane proton channel. CF(1) has five subunits: alpha(3), beta(3), gamma(1), delta(1), epsilon(1). CF(0) has three main subunits: a, b and c.

Its subcellular location is the plastid. The protein resides in the chloroplast thylakoid membrane. This protein seems to be part of the stalk that links CF(0) to CF(1). It either transmits conformational changes from CF(0) into CF(1) or is implicated in proton conduction. The sequence is that of ATP synthase delta chain, chloroplastic (ATPD) from Sorghum bicolor (Sorghum).